Reading from the N-terminus, the 142-residue chain is Large ribosomal subunit protein uL13 (142 aa).

The protein belongs to the universal ribosomal protein uL13 family. As to quaternary structure, part of the 50S ribosomal subunit.

In terms of biological role, this protein is one of the early assembly proteins of the 50S ribosomal subunit, although it is not seen to bind rRNA by itself. It is important during the early stages of 50S assembly. This Coxiella burnetii (strain CbuK_Q154) (Coxiella burnetii (strain Q154)) protein is Large ribosomal subunit protein uL13.